The primary structure comprises 368 residues: DNA replication and repair protein RecF (368 aa).

30 to 37 (GRNGQGKT) contacts ATP.

The protein belongs to the RecF family.

It localises to the cytoplasm. Functionally, the RecF protein is involved in DNA metabolism; it is required for DNA replication and normal SOS inducibility. RecF binds preferentially to single-stranded, linear DNA. It also seems to bind ATP. The chain is DNA replication and repair protein RecF from Trichlorobacter lovleyi (strain ATCC BAA-1151 / DSM 17278 / SZ) (Geobacter lovleyi).